The chain runs to 213 residues: Cell division protein SepF 2 (213 aa).

The segment at 16 to 63 is disordered; that stretch reads EDDGYDGRGFDPDDDFEPELDPEPERDRRRHEPPHQSHQALHPQRDES. A compositionally biased stretch (acidic residues) spans 27-39; it reads PDDDFEPELDPEP.

It belongs to the SepF family. In terms of assembly, homodimer. Interacts with FtsZ.

It is found in the cytoplasm. Its function is as follows. Cell division protein that is part of the divisome complex and is recruited early to the Z-ring. Probably stimulates Z-ring formation, perhaps through the cross-linking of FtsZ protofilaments. Its function overlaps with FtsA. This chain is Cell division protein SepF 2, found in Streptomyces avermitilis (strain ATCC 31267 / DSM 46492 / JCM 5070 / NBRC 14893 / NCIMB 12804 / NRRL 8165 / MA-4680).